A 1407-amino-acid polypeptide reads, in one-letter code: DNA-directed RNA polymerase subunit beta' (1407 aa).

4 residues coordinate Zn(2+): C70, C72, C85, and C88. Mg(2+)-binding residues include D458, D460, and D462. Residues C814, C888, C895, and C898 each coordinate Zn(2+).

It belongs to the RNA polymerase beta' chain family. The RNAP catalytic core consists of 2 alpha, 1 beta, 1 beta' and 1 omega subunit. When a sigma factor is associated with the core the holoenzyme is formed, which can initiate transcription. The cofactor is Mg(2+). Zn(2+) is required as a cofactor.

It carries out the reaction RNA(n) + a ribonucleoside 5'-triphosphate = RNA(n+1) + diphosphate. DNA-dependent RNA polymerase catalyzes the transcription of DNA into RNA using the four ribonucleoside triphosphates as substrates. In Leptothrix cholodnii (strain ATCC 51168 / LMG 8142 / SP-6) (Leptothrix discophora (strain SP-6)), this protein is DNA-directed RNA polymerase subunit beta'.